The sequence spans 296 residues: Ribosomal protein L11 methyltransferase (296 aa).

S-adenosyl-L-methionine contacts are provided by Thr151, Gly172, Asp194, and Asn233.

It belongs to the methyltransferase superfamily. PrmA family.

The protein resides in the cytoplasm. The catalysed reaction is L-lysyl-[protein] + 3 S-adenosyl-L-methionine = N(6),N(6),N(6)-trimethyl-L-lysyl-[protein] + 3 S-adenosyl-L-homocysteine + 3 H(+). Methylates ribosomal protein L11. This Dechloromonas aromatica (strain RCB) protein is Ribosomal protein L11 methyltransferase.